The chain runs to 104 residues: Large ribosomal subunit protein bL21 (104 aa).

The protein belongs to the bacterial ribosomal protein bL21 family. Part of the 50S ribosomal subunit. Contacts protein L20.

Its function is as follows. This protein binds to 23S rRNA in the presence of protein L20. The polypeptide is Large ribosomal subunit protein bL21 (Kosmotoga olearia (strain ATCC BAA-1733 / DSM 21960 / TBF 19.5.1)).